Here is a 694-residue protein sequence, read N- to C-terminus: Elongation factor G (694 aa).

In terms of domain architecture, tr-type G spans 8-284; the sequence is EKLRNIGIVA…AVIDFLPSPV (277 aa). GTP contacts are provided by residues 17 to 24, 81 to 85, and 135 to 138; these read AHIDAGKT, DTPGH, and NKMD.

It belongs to the TRAFAC class translation factor GTPase superfamily. Classic translation factor GTPase family. EF-G/EF-2 subfamily.

The protein localises to the cytoplasm. Its function is as follows. Catalyzes the GTP-dependent ribosomal translocation step during translation elongation. During this step, the ribosome changes from the pre-translocational (PRE) to the post-translocational (POST) state as the newly formed A-site-bound peptidyl-tRNA and P-site-bound deacylated tRNA move to the P and E sites, respectively. Catalyzes the coordinated movement of the two tRNA molecules, the mRNA and conformational changes in the ribosome. The sequence is that of Elongation factor G from Persephonella marina (strain DSM 14350 / EX-H1).